The chain runs to 411 residues: Anaerobic nitric oxide reductase flavorubredoxin homolog (411 aa).

The zinc metallo-hydrolase stretch occupies residues 30–210 (LRGSSYNSYL…PFSRLVTPKI (181 aa)). 10 residues coordinate Fe cation: histidine 79, glutamate 81, aspartate 83, histidine 147, aspartate 166, histidine 227, cysteine 360, cysteine 363, cysteine 393, and cysteine 396. Residues 355–406 (GPRMQCSVCQWIYDPAKGEPMQDVAPGTPWSEVPDNFLCPECSLGKDVFDEL) form the Rubredoxin-like domain.

This sequence in the N-terminal section; belongs to the zinc metallo-hydrolase group 3 family. As to quaternary structure, homotetramer. It depends on Fe cation as a cofactor.

The protein localises to the cytoplasm. The protein operates within nitrogen metabolism; nitric oxide reduction. In terms of biological role, anaerobic nitric oxide reductase; uses NADH to detoxify nitric oxide (NO), protecting several 4Fe-4S NO-sensitive enzymes. Has at least 2 reductase partners, only one of which (NorW, flavorubredoxin reductase) has been identified. NO probably binds to the di-iron center. Also able to function as an aerobic oxygen reductase. The polypeptide is Anaerobic nitric oxide reductase flavorubredoxin homolog (Escherichia coli O157:H7).